The chain runs to 63 residues: Large ribosomal subunit protein uL29 (63 aa).

It belongs to the universal ribosomal protein uL29 family.

This Listeria innocua serovar 6a (strain ATCC BAA-680 / CLIP 11262) protein is Large ribosomal subunit protein uL29.